The following is a 520-amino-acid chain: ATP synthase subunit alpha 2 (520 aa).

176–183 is a binding site for ATP; that stretch reads GDRQTGKT.

Belongs to the ATPase alpha/beta chains family. As to quaternary structure, F-type ATPases have 2 components, CF(1) - the catalytic core - and CF(0) - the membrane proton channel. CF(1) has five subunits: alpha(3), beta(3), gamma(1), delta(1), epsilon(1). CF(0) has three main subunits: a(1), b(2) and c(9-12). The alpha and beta chains form an alternating ring which encloses part of the gamma chain. CF(1) is attached to CF(0) by a central stalk formed by the gamma and epsilon chains, while a peripheral stalk is formed by the delta and b chains.

The protein resides in the cell inner membrane. The enzyme catalyses ATP + H2O + 4 H(+)(in) = ADP + phosphate + 5 H(+)(out). In terms of biological role, produces ATP from ADP in the presence of a proton gradient across the membrane. The alpha chain is a regulatory subunit. In Polaromonas naphthalenivorans (strain CJ2), this protein is ATP synthase subunit alpha 2.